Here is a 439-residue protein sequence, read N- to C-terminus: Xylose isomerase (439 aa).

Residues histidine 101 and aspartate 104 contribute to the active site. Glutamate 232, glutamate 268, histidine 271, aspartate 296, aspartate 307, aspartate 309, and aspartate 339 together coordinate Mg(2+).

The protein belongs to the xylose isomerase family. Homotetramer. It depends on Mg(2+) as a cofactor.

It is found in the cytoplasm. It catalyses the reaction alpha-D-xylose = alpha-D-xylulofuranose. The polypeptide is Xylose isomerase (Photobacterium profundum (strain SS9)).